The following is a 158-amino-acid chain: Protein OPG060 (158 aa).

It belongs to the orthopoxvirus OPG058 family.

This Cynomys gunnisoni (Gunnison's prairie dog) protein is Protein OPG060 (OPG060).